A 736-amino-acid chain; its full sequence is DNA topoisomerase 4 subunit A (736 aa).

In terms of domain architecture, Topo IIA-type catalytic spans 32–496; sequence LPDVRDGLKP…SFEQVTLTNQ (465 aa). Catalysis depends on Tyr120, which acts as the O-(5'-phospho-DNA)-tyrosine intermediate.

The protein belongs to the type II topoisomerase GyrA/ParC subunit family. ParC type 1 subfamily. In terms of assembly, heterotetramer composed of ParC and ParE.

It is found in the cell membrane. The enzyme catalyses ATP-dependent breakage, passage and rejoining of double-stranded DNA.. In terms of biological role, topoisomerase IV is essential for chromosome segregation. It relaxes supercoiled DNA. Performs the decatenation events required during the replication of a circular DNA molecule. The chain is DNA topoisomerase 4 subunit A from Rickettsia bellii (strain RML369-C).